Here is a 400-residue protein sequence, read N- to C-terminus: Phosphoglycerate kinase (400 aa).

Substrate contacts are provided by residues 24–26 (DFN), Arg-39, 62–65 (HLGK), Arg-123, and Arg-156. ATP-binding positions include Lys-207, Gly-298, Glu-329, and 356–359 (GGDS).

It belongs to the phosphoglycerate kinase family. Monomer.

Its subcellular location is the cytoplasm. It catalyses the reaction (2R)-3-phosphoglycerate + ATP = (2R)-3-phospho-glyceroyl phosphate + ADP. It functions in the pathway carbohydrate degradation; glycolysis; pyruvate from D-glyceraldehyde 3-phosphate: step 2/5. This is Phosphoglycerate kinase from Clostridioides difficile (strain 630) (Peptoclostridium difficile).